A 222-amino-acid chain; its full sequence is Interleukin-12 subunit alpha (222 aa).

Positions 1-25 are cleaved as a signal peptide; sequence MCPPRGLLLVAILVLLNHLDHLSLA. 3 cysteine pairs are disulfide-bonded: cysteine 40-cysteine 113, cysteine 67-cysteine 199, and cysteine 88-cysteine 126. Residues asparagine 42, asparagine 96, and asparagine 110 are each glycosylated (N-linked (GlcNAc...) asparagine).

Belongs to the IL-6 superfamily. As to quaternary structure, heterodimer with IL12B; disulfide-linked. This heterodimer is known as interleukin IL-12. Heterodimer with EBI3/IL27B; not disulfide-linked. This heterodimer is known as interleukin IL-35. Interacts with NBR1; this interaction promotes IL-12 secretion.

The protein localises to the secreted. In terms of biological role, heterodimerizes with IL12B to form the IL-12 cytokine or with EBI3/IL27B to form the IL-35 cytokine. IL-12 is primarily produced by professional antigen-presenting cells (APCs) such as B-cells and dendritic cells (DCs) as well as macrophages and granulocytes and regulates T-cell and natural killer-cell responses, induces the production of interferon-gamma (IFN-gamma), favors the differentiation of T-helper 1 (Th1) cells and is an important link between innate resistance and adaptive immunity. Mechanistically, exerts its biological effects through a receptor composed of IL12R1 and IL12R2 subunits. Binding to the receptor results in the rapid tyrosine phosphorylation of a number of cellular substrates including the JAK family kinases TYK2 and JAK2. In turn, recruited STAT4 gets phosphorylated and translocates to the nucleus where it regulates cytokine/growth factor responsive genes. As part of IL-35, plays essential roles in maintaining the immune homeostasis of the liver microenvironment and also functions as an immune-suppressive cytokine. Mediates biological events through unconventional receptors composed of IL12RB2 and gp130/IL6ST heterodimers or homodimers. Signaling requires the transcription factors STAT1 and STAT4, which form a unique heterodimer that binds to distinct DNA sites. In Equus caballus (Horse), this protein is Interleukin-12 subunit alpha (IL12A).